We begin with the raw amino-acid sequence, 407 residues long: Proteasome-activating nucleotidase (407 aa).

Residues 22-67 are a coiled coil; it reads KEKTQIAELESKVLRLELKNKDINRENVQIKKENEILKRELDKLRI. Residues 192-197 and histidine 331 each bind ATP; that span reads GTGKTL. Residues 405–407 form a docks into pockets in the proteasome alpha-ring to cause gate opening region; it reads MYG.

This sequence belongs to the AAA ATPase family. Homohexamer. The hexameric complex has a two-ring architecture resembling a top hat that caps the 20S proteasome core at one or both ends. Upon ATP-binding, the C-terminus of PAN interacts with the alpha-rings of the proteasome core by binding to the intersubunit pockets.

It localises to the cytoplasm. In terms of biological role, ATPase which is responsible for recognizing, binding, unfolding and translocation of substrate proteins into the archaeal 20S proteasome core particle. Is essential for opening the gate of the 20S proteasome via an interaction with its C-terminus, thereby allowing substrate entry and access to the site of proteolysis. Thus, the C-termini of the proteasomal ATPase function like a 'key in a lock' to induce gate opening and therefore regulate proteolysis. Unfolding activity requires energy from ATP hydrolysis, whereas ATP binding alone promotes ATPase-20S proteasome association which triggers gate opening, and supports translocation of unfolded substrates. The chain is Proteasome-activating nucleotidase from Methanococcus maripaludis (strain DSM 14266 / JCM 13030 / NBRC 101832 / S2 / LL).